The primary structure comprises 211 residues: MARVRIRQHVNPLSEKYRQVLACPDWATVYDDVQRPLHLDIGCARGRFPLKMAQQHPDWNFLGVEIRQPLVLEANETGDRLGLKNLHYLFGNINVEPEKFFSAFPPTLQRVSIQFPDPWFKQRHNKRRVAQPELVTAIANALPPGGEVLLQSDVEPVAQDMRDRFAENDNFVFTHDTPWLAENPLGVPTEREIACFNLQRPVYRCLLQRTP.

Positions 40, 65, 92, and 117 each coordinate S-adenosyl-L-methionine. The active site involves Asp117. Lys121 is a substrate binding site. An interaction with RNA region spans residues 123–128 (RHNKRR). Asp153 lines the substrate pocket.

Belongs to the class I-like SAM-binding methyltransferase superfamily. TrmB family.

It catalyses the reaction guanosine(46) in tRNA + S-adenosyl-L-methionine = N(7)-methylguanosine(46) in tRNA + S-adenosyl-L-homocysteine. Its pathway is tRNA modification; N(7)-methylguanine-tRNA biosynthesis. Functionally, catalyzes the formation of N(7)-methylguanine at position 46 (m7G46) in tRNA. This Synechocystis sp. (strain ATCC 27184 / PCC 6803 / Kazusa) protein is tRNA (guanine-N(7)-)-methyltransferase.